The following is a 277-amino-acid chain: Small ribosomal subunit protein uS2 (277 aa).

A disordered region spans residues 254-277 (LAGAGSSALNDSGADLSEANPTEA).

This sequence belongs to the universal ribosomal protein uS2 family.

This Mycobacterium leprae (strain TN) protein is Small ribosomal subunit protein uS2 (rpsB).